Consider the following 64-residue polypeptide: Putative antitoxin MJ0975 (64 aa).

It belongs to the UPF0165 family.

In terms of biological role, possibly the antitoxin component of a type II toxin-antitoxin (TA) system. Its cognate toxin is VapC2 (Potential). This is Putative antitoxin MJ0975 (vapB2) from Methanocaldococcus jannaschii (strain ATCC 43067 / DSM 2661 / JAL-1 / JCM 10045 / NBRC 100440) (Methanococcus jannaschii).